The chain runs to 266 residues: MATKILALLALLALFVSATNAFIIPQCSLAPSAIIPQFLPPVTSMGFEHLAVQAYRLQQALAASVLQQPINQLQQQSLAHLTIQTIATQQQQQFLPALSQLDVVNPVAYLQQQLLASNPLALANVAAYQQQQQLQQFLPALSQLAMVNPAAYLQQQQLLSSSPLAVGNAPTYLQQQLLQQIVPALTQLAVANPAAYLQQLLPFNQLTVSNSAAYLQQRQQLLNPLEVPNPLVAAFLQQQQLLPYSQFSLMNPALSWQQPIVGGAIF.

A signal peptide spans 1–21 (MATKILALLALLALFVSATNA).

It belongs to the zein family.

Zeins are major seed storage proteins. In Zea mays (Maize), this protein is 22 kDa alpha-zein 8.